A 95-amino-acid polypeptide reads, in one-letter code: Large ribosomal subunit protein bL25 (95 aa).

Belongs to the bacterial ribosomal protein bL25 family. As to quaternary structure, part of the 50S ribosomal subunit; part of the 5S rRNA/L5/L18/L25 subcomplex. Contacts the 5S rRNA. Binds to the 5S rRNA independently of L5 and L18.

In terms of biological role, this is one of the proteins that binds to the 5S RNA in the ribosome where it forms part of the central protuberance. The sequence is that of Large ribosomal subunit protein bL25 from Actinobacillus pleuropneumoniae serotype 3 (strain JL03).